We begin with the raw amino-acid sequence, 94 residues long: Neutrophil defensin 1 (94 aa).

An N-terminal signal peptide occupies residues 1 to 19; sequence MRTLAILAAILLVALQAQA. The propeptide occupies 20–38; sequence EPLQARADEVAAAPEQIAA. Cystine bridges form between cysteine 66/cysteine 94, cysteine 68/cysteine 83, and cysteine 73/cysteine 93. At arginine 78 the chain carries ADP-ribosylarginine; by ART1. Tyrosine 85 is subject to Phosphotyrosine. Arginine 88 carries the ADP-ribosylarginine; by ART1 modification.

It belongs to the alpha-defensin family. In terms of assembly, tetramer. Dimer. Interacts with RETN. As to quaternary structure, (Microbial infection) Interacts with HIV-1 surface protein gp120. (Microbial infection) Interacts with herpes virus 1 (HHV1) envelope glycoprotein B; this interaction inhibits viral infection. ADP-ribosylation drastically reduces cytotoxic and antibacterial activities, and enhances IL8 production. In terms of processing, phosphorylation at Tyr-85 has been found in some cancer cell lines, and interferes with ADP-ribosylation.

It is found in the secreted. In terms of biological role, effector molecule of the innate immune system that acts via antibiotic-like properties against a broad array of infectious agents including bacteria, fungi, and viruses or by promoting the activation and maturation of some APCs. Interacts with the essential precursor of cell wall synthesis lipid II to inhibit bacterial cell wall synthesis. Inhibits adenovirus infection via inhibition of viral disassembly at the vertex region, thereby restricting the release of internal capsid protein pVI, which is required for endosomal membrane penetration during cell entry. In addition, interaction with adenovirus capsid leads to the redirection of viral particles to TLR4 thereby promoting a NLRP3-mediated inflammasome response and interleukin 1-beta (IL-1beta) release. Induces the production of proinflammatory cytokines including type I interferon (IFN) in plasmacytoid dendritic cells (pDCs) by triggering the degradation of NFKBIA and nuclear translocation of IRF1, both of which are required for activation of pDCs. The polypeptide is Neutrophil defensin 1 (DEFA1) (Homo sapiens (Human)).